The primary structure comprises 236 residues: Ubiquinone biosynthesis O-methyltransferase (236 aa).

Positions 39, 59, 80, and 124 each coordinate S-adenosyl-L-methionine.

Belongs to the methyltransferase superfamily. UbiG/COQ3 family.

It catalyses the reaction a 3-demethylubiquinol + S-adenosyl-L-methionine = a ubiquinol + S-adenosyl-L-homocysteine + H(+). The enzyme catalyses a 3-(all-trans-polyprenyl)benzene-1,2-diol + S-adenosyl-L-methionine = a 2-methoxy-6-(all-trans-polyprenyl)phenol + S-adenosyl-L-homocysteine + H(+). It functions in the pathway cofactor biosynthesis; ubiquinone biosynthesis. In terms of biological role, O-methyltransferase that catalyzes the 2 O-methylation steps in the ubiquinone biosynthetic pathway. This Shewanella sp. (strain MR-7) protein is Ubiquinone biosynthesis O-methyltransferase.